Reading from the N-terminus, the 355-residue chain is RNA binding protein fox-1 homolog 1 (355 aa).

The tract at residues 1-123 (MNCEREQLRG…QPKRLHVSNI (123 aa)) is disordered. Polar residues predominate over residues 70–112 (QSHSEQSAADTSAHTVSGTATTDDSAPTDGQPQTQPSENTENK). One can recognise an RRM domain in the interval 116–174 (KRLHVSNIPFRFRDPDLRQMFGGFGFVTFENSADADRAREKLHGTVVEGRKIEVNNATA). Arg-298 is modified (asymmetric dimethylarginine).

Binds to the C-terminus of ATXN2.

The protein localises to the nucleus. Its subcellular location is the cytoplasm. RNA-binding protein that regulates alternative splicing events by binding to 5'-UGCAUGU-3' elements. Prevents binding of U2AF2 to the 3'-splice site. Regulates alternative splicing of tissue-specific exons and of differentially spliced exons during erythropoiesis. The polypeptide is RNA binding protein fox-1 homolog 1 (RBFOX1) (Bos taurus (Bovine)).